A 149-amino-acid chain; its full sequence is Vesicle-associated protein 3-1 (149 aa).

Methionine 1 is modified (N-acetylmethionine). Serine 2 carries the post-translational modification N-acetylserine; in Vesicle-associated protein 3-1, N-terminally processed. The 121-residue stretch at 6–126 (LLEIEPMYLQ…EETKLRVTYV (121 aa)) folds into the MSP domain.

The protein belongs to the VAMP-associated protein (VAP) (TC 9.B.17) family.

Its function is as follows. May play a role in vesicle trafficking. The sequence is that of Vesicle-associated protein 3-1 (PVA31) from Arabidopsis thaliana (Mouse-ear cress).